The primary structure comprises 720 residues: Photosystem I P700 chlorophyll a apoprotein A1 (720 aa).

The next 8 membrane-spanning stretches (helical) occupy residues 61 to 84 (VFSA…FHGA), 147 to 170 (LYCT…FHYH), 186 to 210 (LNHH…HVSL), 282 to 300 (TAHH…GHMY), 337 to 360 (WHAQ…HHMY), 376 to 402 (LSLF…IFMV), 424 to 446 (AIVS…LYIH), and 522 to 540 (FLVH…LILL). [4Fe-4S] cluster is bound by residues C564 and C573. Helical transmembrane passes span 580–601 (HVFL…HFSW) and 655–677 (LSAY…MFLF). H666 is a chlorophyll a' binding site. The chlorophyll a site is built by M674 and Y682. W683 serves as a coordination point for phylloquinone. The chain crosses the membrane as a helical span at residues 715–720 (AVGVAH).

The protein belongs to the PsaA/PsaB family. In terms of assembly, the PsaA/B heterodimer binds the P700 chlorophyll special pair and subsequent electron acceptors. PSI consists of a core antenna complex that captures photons, and an electron transfer chain that converts photonic excitation into a charge separation. The eukaryotic PSI reaction center is composed of at least 11 subunits. P700 is a chlorophyll a/chlorophyll a' dimer, A0 is one or more chlorophyll a, A1 is one or both phylloquinones and FX is a shared 4Fe-4S iron-sulfur center. is required as a cofactor.

The protein resides in the plastid. Its subcellular location is the chloroplast thylakoid membrane. The enzyme catalyses reduced [plastocyanin] + hnu + oxidized [2Fe-2S]-[ferredoxin] = oxidized [plastocyanin] + reduced [2Fe-2S]-[ferredoxin]. PsaA and PsaB bind P700, the primary electron donor of photosystem I (PSI), as well as the electron acceptors A0, A1 and FX. PSI is a plastocyanin-ferredoxin oxidoreductase, converting photonic excitation into a charge separation, which transfers an electron from the donor P700 chlorophyll pair to the spectroscopically characterized acceptors A0, A1, FX, FA and FB in turn. Oxidized P700 is reduced on the lumenal side of the thylakoid membrane by plastocyanin. This chain is Photosystem I P700 chlorophyll a apoprotein A1, found in Sequoia sempervirens (California redwood).